Consider the following 200-residue polypeptide: DNA-directed RNA polymerase subunit 7-like protein (200 aa).

It belongs to the eukaryotic RPB7/RPC8 RNA polymerase subunit family.

It is found in the nucleus. In Arabidopsis thaliana (Mouse-ear cress), this protein is DNA-directed RNA polymerase subunit 7-like protein (NRPB7L).